A 255-amino-acid polypeptide reads, in one-letter code: MNDLSGKTVIITGGARGLGAEAARQAVAAGARVVLADVLDEEGAATARELGDAARYQHLDVTIEEDWQRVVAYAREEFGSVDGLVNNAGISTGMFLETESVERFRKVVDINLTGVFIGMKTVIPAMKDAGGGSIVNISSAAGLMGLALTSSYGASKWGVRGLSKLAAVELGTDRIRVNSVHPGMTYTPMTAETGIRQGEGNYPNTPMGRVGNEPGEIAGAVVKLLSDTSSYVTGAELAVDGGWTTGPTVKYVMGQ.

10–34 (IITGGARGLGAEAARQAVAAGARVV) lines the NAD(+) pocket. A substrate-binding site is contributed by serine 139. Tyrosine 152 acts as the Proton acceptor in catalysis.

Belongs to the short-chain dehydrogenases/reductases (SDR) family. As to quaternary structure, homotetramer.

The catalysed reaction is androstan-3alpha,17beta-diol + NAD(+) = 17beta-hydroxyandrostanone + NADH + H(+). The protein operates within lipid metabolism; C21-steroid hormone metabolism. This chain is 3-alpha-(or 20-beta)-hydroxysteroid dehydrogenase, found in Streptomyces exfoliatus (Streptomyces hydrogenans).